Here is a 183-residue protein sequence, read N- to C-terminus: MDIDPYKEFGASVELLSFLPSDFFPSVRDLLDTASALYREALESPEHCSPNHTALRQAVLCWGELMTGCSWVGNNLEDPASRELVVNYVNTNMGLKIRQLLWFHISCLTFGRETVLEYLVSFGVWIRTPPAYRPPNAPILSTLPETTVVRRRGRSPRRRTPSPRRRRSQSPRRRRSQSPASQC.

The tract at residues N136–C183 is disordered. The segment covering V149–S176 has biased composition (basic residues). Phosphoserine; by host is present on residues S155, S162, and S170. Residues S155 to P161 form a 1; half-length repeat. The interval S155–Q177 is 3 X 8 AA repeats of S-P-R-R-R-[PR]-S-Q. Positions R158 to R175 match the Bipartite nuclear localization signal motif. Repeat copies occupy residues S162–Q169 and S170–Q177. The segment at Q177–C183 is RNA binding.

Belongs to the orthohepadnavirus core antigen family. In terms of assembly, homodimerizes, then multimerizes. Interacts with cytosol exposed regions of viral L glycoprotein present in the reticulum-to-Golgi compartment. Interacts with human FLNB. Phosphorylated form interacts with host importin alpha; this interaction depends on the exposure of the NLS, which itself depends upon genome maturation and/or phosphorylation of the capsid protein. Interacts with host NUP153. Post-translationally, phosphorylated by host SRPK1, SRPK2, and maybe protein kinase C or GAPDH. Phosphorylation is critical for pregenomic RNA packaging. Protein kinase C phosphorylation is stimulated by HBx protein and may play a role in transport of the viral genome to the nucleus at the late step during the viral replication cycle.

It localises to the virion. Its subcellular location is the host cytoplasm. Functionally, self assembles to form an icosahedral capsid. Most capsids appear to be large particles with an icosahedral symmetry of T=4 and consist of 240 copies of capsid protein, though a fraction forms smaller T=3 particles consisting of 180 capsid proteins. Entering capsids are transported along microtubules to the nucleus. Phosphorylation of the capsid is thought to induce exposure of nuclear localization signal in the C-terminal portion of the capsid protein that allows binding to the nuclear pore complex via the importin (karyopherin-) alpha and beta. Capsids are imported in intact form through the nuclear pore into the nuclear basket, where it probably binds NUP153. Only capsids that contain the mature viral genome can release the viral DNA and capsid protein into the nucleoplasm. Immature capsids get stuck in the basket. Capsids encapsulate the pre-genomic RNA and the P protein. Pre-genomic RNA is reverse-transcribed into DNA while the capsid is still in the cytoplasm. The capsid can then either be directed to the nucleus, providing more genomes for transcription, or bud through the endoplasmic reticulum to provide new virions. This Hylobatidae (gibbons) protein is Capsid protein.